A 206-amino-acid polypeptide reads, in one-letter code: Ribosomal RNA large subunit methyltransferase E (206 aa).

Positions 54, 56, 76, 94, and 118 each coordinate S-adenosyl-L-methionine. Residue Lys158 is the Proton acceptor of the active site.

Belongs to the class I-like SAM-binding methyltransferase superfamily. RNA methyltransferase RlmE family.

The protein resides in the cytoplasm. It catalyses the reaction uridine(2552) in 23S rRNA + S-adenosyl-L-methionine = 2'-O-methyluridine(2552) in 23S rRNA + S-adenosyl-L-homocysteine + H(+). In terms of biological role, specifically methylates the uridine in position 2552 of 23S rRNA at the 2'-O position of the ribose in the fully assembled 50S ribosomal subunit. The polypeptide is Ribosomal RNA large subunit methyltransferase E (Methanosphaera stadtmanae (strain ATCC 43021 / DSM 3091 / JCM 11832 / MCB-3)).